A 1067-amino-acid polypeptide reads, in one-letter code: Eukaryotic translation initiation factor 3 subunit A (1067 aa).

Residues 92–121 (LKKFIELAEKKVTEAQAKADEIQSSLESAA) are a coiled coil. The region spanning 339 to 523 (MTKAASFVLL…GVLTFDTDIF (185 aa)) is the PCI domain. The stretch at 608 to 899 (RVLIEKKKEA…QKQREEEAEA (292 aa)) forms a coiled coil. Basic and acidic residues-rich tracts occupy residues 617 to 632 (AATDALQRKQREEETR), 642 to 665 (EAEKQRLLDEQREREKKRLKDEQD), 795 to 901 (EVSE…EARR), and 916 to 926 (AEPERPAERTA). Disordered stretches follow at residues 617-665 (AATD…DEQD) and 795-1067 (EVSE…QQQQ). Composition is skewed to low complexity over residues 965–976 (AAPAAAPAPAAE) and 1025–1046 (SSSSQPPSRTQTPPAPAAAASS).

The protein belongs to the eIF-3 subunit A family. Component of the eukaryotic translation initiation factor 3 (eIF-3) complex.

It is found in the cytoplasm. RNA-binding component of the eukaryotic translation initiation factor 3 (eIF-3) complex, which is involved in protein synthesis of a specialized repertoire of mRNAs and, together with other initiation factors, stimulates binding of mRNA and methionyl-tRNAi to the 40S ribosome. The eIF-3 complex specifically targets and initiates translation of a subset of mRNAs involved in cell proliferation. The polypeptide is Eukaryotic translation initiation factor 3 subunit A (tif32) (Neosartorya fischeri (strain ATCC 1020 / DSM 3700 / CBS 544.65 / FGSC A1164 / JCM 1740 / NRRL 181 / WB 181) (Aspergillus fischerianus)).